The following is a 312-amino-acid chain: Protoheme IX farnesyltransferase (312 aa).

Transmembrane regions (helical) follow at residues V33–N53, P54–L74, F105–W125, F126–L146, I154–G174, F181–F201, I243–I263, and F291–I311.

Belongs to the UbiA prenyltransferase family. Protoheme IX farnesyltransferase subfamily.

The protein localises to the cell inner membrane. The enzyme catalyses heme b + (2E,6E)-farnesyl diphosphate + H2O = Fe(II)-heme o + diphosphate. It functions in the pathway porphyrin-containing compound metabolism; heme O biosynthesis; heme O from protoheme: step 1/1. In terms of biological role, converts heme B (protoheme IX) to heme O by substitution of the vinyl group on carbon 2 of heme B porphyrin ring with a hydroxyethyl farnesyl side group. The protein is Protoheme IX farnesyltransferase of Bartonella henselae (strain ATCC 49882 / DSM 28221 / CCUG 30454 / Houston 1) (Rochalimaea henselae).